Reading from the N-terminus, the 179-residue chain is Coiled-coil domain-containing protein 32 (179 aa).

The stretch at 75–98 (EVYLASLEKKLRRIKGLNEEVTSK) forms a coiled coil. The segment at 157 to 179 (FLIPPESQAEKPEARDEPAAAEQ) is disordered. Over residues 164-179 (QAEKPEARDEPAAAEQ) the composition is skewed to basic and acidic residues.

Interacts with AP2S1; the interaction is direct and mediates association with adaptor protein complex 2 (AP-2).

The protein localises to the membrane. The protein resides in the coated pit. Functionally, regulates clathrin-mediated endocytsois of cargos such as transferrin probably through the association and modulation of adaptor protein complex 2 (AP-2). Has a role in ciliogenesis. Required for proper cephalic and left/right axis development. The polypeptide is Coiled-coil domain-containing protein 32 (Ccdc32) (Rattus norvegicus (Rat)).